We begin with the raw amino-acid sequence, 893 residues long: Alpha-actinin-1 (893 aa).

The interval 1–248 is actin-binding; it reads MDHHYDPQQT…IMTYVSSFYH (248 aa). Phosphotyrosine; by FAK1 is present on Tyr-13. Calponin-homology (CH) domains follow at residues 32-136 and 145-251; these read KQQR…LRFA and TSAK…HAFS. 4 Spectrin repeats span residues 275–385, 395–500, 510–621, and 631–734; these read QLME…WLLN, HLAE…ALER, QLYL…ALME, and RLRK…EVEN. 2 EF-hand domains span residues 747–782 and 788–823; these read EQMNEFRASFNHFDRDHSGTLGPEEFKACLISLGYD and QGEAEFARIMSIVDPNRMGVVTFQAFIDFMSRETAD. The Ca(2+) site is built by Asp-760, Asp-762, Ser-764, Thr-766, and Glu-771.

Belongs to the alpha-actinin family. Homodimer; antiparallel. Interacts with PDLIM4 (via PDZ domain).

The protein localises to the cytoplasm. The protein resides in the cytoskeleton. It is found in the myofibril. It localises to the sarcomere. Its subcellular location is the z line. The protein localises to the cell membrane. The protein resides in the cell junction. It is found in the cell projection. It localises to the ruffle. In terms of biological role, F-actin cross-linking protein is thought to anchor actin to a variety of intracellular structures. This is a bundling protein. The polypeptide is Alpha-actinin-1 (ACTN1) (Gallus gallus (Chicken)).